A 179-amino-acid chain; its full sequence is Fas apoptotic inhibitory molecule 1 (179 aa).

T2 bears the N-acetylthreonine mark.

The protein belongs to the FAIM1 family. As to expression, widely expressed, with the highest levels in brain, thymus, kidney, and spleen.

It is found in the cytoplasm. Its function is as follows. Plays a role as an inducible effector molecule that mediates Fas resistance produced by surface Ig engagement in B cells. The polypeptide is Fas apoptotic inhibitory molecule 1 (Faim) (Mus musculus (Mouse)).